Consider the following 344-residue polypeptide: Small ribosomal subunit protein mS38 (344 aa).

3 disordered regions span residues 1 to 27 (MIPQSVRRVVAAAPQSPVVSSLAASSA), 43 to 101 (ALQK…SVPS), and 325 to 344 (KKYKKLMRRTRNERRKQDRL). Positions 51–74 (SSKPSSPDDGSSRAFAARASVPAA) are enriched in low complexity. Positions 325-338 (KKYKKLMRRTRNER) are enriched in basic residues.

Belongs to the mitochondrion-specific ribosomal protein mS38 family. Component of the mitochondrial small ribosomal subunit (mt-SSU). Mature N.crassa 74S mitochondrial ribosomes consist of a small (37S) and a large (54S) subunit. The 37S small subunit contains a 16S ribosomal RNA (16S mt-rRNA) and 32 different proteins. The 54S large subunit contains a 23S rRNA (23S mt-rRNA) and 42 different proteins.

It localises to the mitochondrion. In terms of biological role, component of the mitochondrial ribosome (mitoribosome), a dedicated translation machinery responsible for the synthesis of mitochondrial genome-encoded proteins, including at least some of the essential transmembrane subunits of the mitochondrial respiratory chain. The mitoribosomes are attached to the mitochondrial inner membrane and translation products are cotranslationally integrated into the membrane. This Neurospora crassa (strain ATCC 24698 / 74-OR23-1A / CBS 708.71 / DSM 1257 / FGSC 987) protein is Small ribosomal subunit protein mS38 (cox24).